The following is a 219-amino-acid chain: Probable GTP-binding protein EngB (219 aa).

The EngB-type G domain occupies 31–205 (VGVEIAFAGR…LSILNEWCHP (175 aa)). GTP contacts are provided by residues 39-46 (GRSNAGKS), 66-70 (GRTQL), 84-87 (DLPG), 151-154 (TKSD), and 184-186 (FSS). Mg(2+) contacts are provided by Ser46 and Thr68.

Belongs to the TRAFAC class TrmE-Era-EngA-EngB-Septin-like GTPase superfamily. EngB GTPase family. Requires Mg(2+) as cofactor.

Necessary for normal cell division and for the maintenance of normal septation. This is Probable GTP-binding protein EngB from Shewanella denitrificans (strain OS217 / ATCC BAA-1090 / DSM 15013).